A 939-amino-acid chain; its full sequence is Phosphoenolpyruvate carboxylase (939 aa).

Residues histidine 151 and lysine 593 contribute to the active site.

It belongs to the PEPCase type 1 family. Requires Mg(2+) as cofactor.

The catalysed reaction is oxaloacetate + phosphate = phosphoenolpyruvate + hydrogencarbonate. Forms oxaloacetate, a four-carbon dicarboxylic acid source for the tricarboxylic acid cycle. The chain is Phosphoenolpyruvate carboxylase from Gloeobacter violaceus (strain ATCC 29082 / PCC 7421).